The sequence spans 379 residues: UDP-4-amino-4-deoxy-L-arabinose--oxoglutarate aminotransferase (379 aa).

Lys-182 bears the N6-(pyridoxal phosphate)lysine mark.

It belongs to the DegT/DnrJ/EryC1 family. ArnB subfamily. In terms of assembly, homodimer. Pyridoxal 5'-phosphate is required as a cofactor.

The enzyme catalyses UDP-4-amino-4-deoxy-beta-L-arabinose + 2-oxoglutarate = UDP-beta-L-threo-pentopyranos-4-ulose + L-glutamate. It functions in the pathway nucleotide-sugar biosynthesis; UDP-4-deoxy-4-formamido-beta-L-arabinose biosynthesis; UDP-4-deoxy-4-formamido-beta-L-arabinose from UDP-alpha-D-glucuronate: step 2/3. Its pathway is bacterial outer membrane biogenesis; lipopolysaccharide biosynthesis. In terms of biological role, catalyzes the conversion of UDP-4-keto-arabinose (UDP-Ara4O) to UDP-4-amino-4-deoxy-L-arabinose (UDP-L-Ara4N). The modified arabinose is attached to lipid A and is required for resistance to polymyxin and cationic antimicrobial peptides. The protein is UDP-4-amino-4-deoxy-L-arabinose--oxoglutarate aminotransferase of Escherichia coli O81 (strain ED1a).